A 445-amino-acid chain; its full sequence is MAAQVASGVGNLNLNSEDGAAAKNISAQGSPENEARESDGEYDDDQGAPELGNTTAAKKKKKKTKKKKKGTSKVQTEPPRVILSSLFPNNQYPEGEIIEYQNENAYRTTNEEKRHLDRMNNDFLAEYRYAAEVHRQVRQYSQKAIKPGQTLTEIAEGIEESVRALTGYPGLEEGDNLRGGIAFPTGVNLNHCAAHYTPNAGNKMVLQYEDVMKVDFGVHINGRIVDSAFTIAFDPVYDNLLAAVKDATNTGIKQAGIDVRMSDIGAAIQEAMESYEVEIKGTSYPVKAIRNLNGHTIGRYEIHGGKNGKSVPIVKGGDQTKMEEGEVYAIETFGSTGRGYVRDDMETSHYAKIPDAPNVPLRLSSAKNLLNVITKNFGTLPFCRRYLDRLGQDKYLLGLNNLVANGIVDAYPPLCDVKGSYTAQFEHTILLRPNVKEVISRGDDY.

Positions 1–80 are disordered; that stretch reads MAAQVASGVG…TSKVQTEPPR (80 aa). A compositionally biased stretch (basic residues) spans 57–71; sequence AKKKKKKTKKKKKGT. Residue H195 coordinates substrate. Residues D215, D226, and H295 each coordinate a divalent metal cation. H303 contributes to the substrate binding site. 2 residues coordinate a divalent metal cation: E331 and E426.

Belongs to the peptidase M24A family. Methionine aminopeptidase eukaryotic type 2 subfamily. Co(2+) is required as a cofactor. The cofactor is Zn(2+). Requires Mn(2+) as cofactor. It depends on Fe(2+) as a cofactor.

The protein localises to the cytoplasm. It catalyses the reaction Release of N-terminal amino acids, preferentially methionine, from peptides and arylamides.. In terms of biological role, cotranslationally removes the N-terminal methionine from nascent proteins. The N-terminal methionine is often cleaved when the second residue in the primary sequence is small and uncharged (Met-Ala-, Cys, Gly, Pro, Ser, Thr, or Val). The protein is Methionine aminopeptidase 2 of Paracoccidioides brasiliensis (strain Pb18).